The sequence spans 139 residues: Short neuropeptide F (139 aa).

The propeptide occupies 1-23 (MGRARRTVRAPAQHDALGGHALA). Positions 1–48 (MGRARRTVRAPAQHDALGGHALARKSVRSPSRRLRFGRRSDPDMPPQA) are disordered. The span at 22–37 (LARKSVRSPSRRLRFG) shows a compositional bias: basic residues. Residue phenylalanine 36 is modified to Phenylalanine amide. Residues 40–62 (SDPDMPPQAPLDEMNELLSLREV) constitute a propeptide that is removed on maturation. Position 70 is a phenylalanine amide (phenylalanine 70). Residues 74-96 (SEERAVPHIFPQEFLTQEQDRAV) constitute a propeptide that is removed on maturation. At phenylalanine 105 the chain carries Phenylalanine amide. The propeptide occupies 109–139 (SDNNMFLLPYESALPQEVKANGSVEDDRQQE).

It belongs to the NPY family. In terms of tissue distribution, sNPF peptide 1: Expressed in corpora cardiaca (CC), corpora allata (CA), antennal lobe (AL) and gnathal ganglion (GNG) (at protein level). Expression in AL detected in all animals, in GNG in most animals, expression in CC and CA in some animals (at protein level). sNPF peptide 2: Expressed in corpora cardiaca (CC), corpora allata (CA), antennal lobe (AL) and gnathal ganglion (GNG) (at protein level). Expression in AL detected in all animals, in GNG, CC and CA in most animals (at protein level). sNPF peptide 3: Expressed in corpora cardiaca (CC), corpora allata (CA), antennal lobe (AL) and gnathal ganglion (GNG) (at protein level). Expression detected in all animals (at protein level).

Its subcellular location is the secreted. Functionally, plays a role in controlling food intake and regulating body size. The protein is Short neuropeptide F of Agrotis ipsilon (Black cutworm moth).